A 316-amino-acid polypeptide reads, in one-letter code: Small kinetochore-associated protein (316 aa).

S128 carries the phosphoserine modification. Positions 159–316 are interaction with SPAG5; sequence VRKGYKPLSK…LKEMEQLLEM (158 aa). 2 coiled-coil regions span residues 166–216 and 248–316; these read LSKQ…FRDN and SMLL…LLEM.

In terms of assembly, part of an astrin (SPAG5)-kinastrin (SKAP) complex containing KNSTRN, SPAG5, PLK1, DYNLL1 and SGO2. Interacts with SPAG5. Directly binds to microtubules, although at relatively low affinity. Interacts with CENPE; this interaction greatly favors microtubule-binding. Interacts with DSN1/MIS13; leading to localization to kinetochores. Interacts with MAPRE1/EB1; leading to localization to the microtubule plus ends. Interacts with PRPF19. Interacts with DYNLL1. Interacts with MAP4. Widely expressed, including in skin.

Its subcellular location is the nucleus. It localises to the chromosome. The protein localises to the centromere. It is found in the kinetochore. The protein resides in the cytoplasm. Its subcellular location is the cytoskeleton. It localises to the spindle pole. The protein localises to the microtubule organizing center. In terms of biological role, essential component of the mitotic spindle required for faithful chromosome segregation and progression into anaphase. Promotes the metaphase-to-anaphase transition and is required for chromosome alignment, normal timing of sister chromatid segregation, and maintenance of spindle pole architecture. The astrin (SPAG5)-kinastrin (SKAP) complex promotes stable microtubule-kinetochore attachments. Required for kinetochore oscillations and dynamics of microtubule plus-ends during live cell mitosis, possibly by forming a link between spindle microtubule plus-ends and mitotic chromosomes to achieve faithful cell division. May be involved in UV-induced apoptosis via its interaction with PRPF19; however, these results need additional evidences. This Homo sapiens (Human) protein is Small kinetochore-associated protein.